A 468-amino-acid polypeptide reads, in one-letter code: 3-isopropylmalate dehydratase large subunit (468 aa).

The [4Fe-4S] cluster site is built by Cys-345, Cys-405, and Cys-408.

It belongs to the aconitase/IPM isomerase family. LeuC type 1 subfamily. As to quaternary structure, heterodimer of LeuC and LeuD. Requires [4Fe-4S] cluster as cofactor.

It carries out the reaction (2R,3S)-3-isopropylmalate = (2S)-2-isopropylmalate. The protein operates within amino-acid biosynthesis; L-leucine biosynthesis; L-leucine from 3-methyl-2-oxobutanoate: step 2/4. Functionally, catalyzes the isomerization between 2-isopropylmalate and 3-isopropylmalate, via the formation of 2-isopropylmaleate. The chain is 3-isopropylmalate dehydratase large subunit from Oceanobacillus iheyensis (strain DSM 14371 / CIP 107618 / JCM 11309 / KCTC 3954 / HTE831).